A 180-amino-acid polypeptide reads, in one-letter code: Urease accessory protein UreE (180 aa).

The disordered stretch occupies residues 71-90 (AAPSGAGHGDGEQDGTGAPG).

The protein belongs to the UreE family.

The protein localises to the cytoplasm. Involved in urease metallocenter assembly. Binds nickel. Probably functions as a nickel donor during metallocenter assembly. The polypeptide is Urease accessory protein UreE (Kocuria rhizophila (strain ATCC 9341 / DSM 348 / NBRC 103217 / DC2201)).